Here is a 140-residue protein sequence, read N- to C-terminus: Alpha-lactalbumin (140 aa).

The signal sequence occupies residues 1-19 (MMSLLPLLLIGIVLPATQA). Residues 20–140 (KDYGKCELNQ…CRENLDQWNC (121 aa)) enclose the C-type lysozyme domain. Intrachain disulfides connect Cys25/Cys140, Cys47/Cys131, Cys80/Cys96, and Cys92/Cys110. Ca(2+) contacts are provided by Lys98, Asp101, Asp103, Asp106, and Asp107.

As to quaternary structure, lactose synthase (LS) is a heterodimer of a catalytic component, beta1,4-galactosyltransferase (beta4Gal-T1) and a regulatory component, alpha-lactalbumin (LA). Mammary gland specific. Secreted in milk.

It localises to the secreted. Regulatory subunit of lactose synthase, changes the substrate specificity of galactosyltransferase in the mammary gland making glucose a good acceptor substrate for this enzyme. This enables LS to synthesize lactose, the major carbohydrate component of milk. In other tissues, galactosyltransferase transfers galactose onto the N-acetylglucosamine of the oligosaccharide chains in glycoproteins. This Trichosurus vulpecula (Brush-tailed possum) protein is Alpha-lactalbumin (LALBA).